The chain runs to 49 residues: Osteocalcin (49 aa).

In terms of domain architecture, Gla spans 1–47 (YLDHGLGAPAPYVDPLEPKREVCELNPDCDELADQMGFQEAYRRFYG). At proline 9 the chain carries 4-hydroxyproline. The Ca(2+) site is built by glutamate 17, glutamate 21, glutamate 24, and aspartate 30. 4-carboxyglutamate is present on residues glutamate 17, glutamate 21, and glutamate 24. Cysteine 23 and cysteine 29 are oxidised to a cystine.

This sequence belongs to the osteocalcin/matrix Gla protein family. In terms of processing, gamma-carboxyglutamic acid residues are formed by vitamin K dependent carboxylation. These residues are essential for the binding of calcium.

It is found in the secreted. Its function is as follows. The carboxylated form is one of the main organic components of the bone matrix, which constitutes 1-2% of the total bone protein: it acts as a negative regulator of bone formation and is required to limit bone formation without impairing bone resorption or mineralization. The carboxylated form binds strongly to apatite and calcium. The uncarboxylated form acts as a hormone secreted by osteoblasts, which regulates different cellular processes, such as energy metabolism, male fertility and brain development. Regulates of energy metabolism by acting as a hormone favoring pancreatic beta-cell proliferation, insulin secretion and sensitivity and energy expenditure. Uncarboxylated osteocalcin hormone also promotes testosterone production in the testes: acts as a ligand for G protein-coupled receptor GPRC6A at the surface of Leydig cells, initiating a signaling response that promotes the expression of enzymes required for testosterone synthesis in a CREB-dependent manner. Also acts as a regulator of brain development: osteocalcin hormone crosses the blood-brain barrier and acts as a ligand for GPR158 on neurons, initiating a signaling response that prevents neuronal apoptosis in the hippocampus, favors the synthesis of all monoamine neurotransmitters and inhibits that of gamma-aminobutyric acid (GABA). Osteocalcin also crosses the placenta during pregnancy and maternal osteocalcin is required for fetal brain development. The chain is Osteocalcin from Lama guanicoe (Guanaco).